Here is a 153-residue protein sequence, read N- to C-terminus: Putative pre-16S rRNA nuclease (153 aa).

The protein belongs to the YqgF nuclease family.

It localises to the cytoplasm. Could be a nuclease involved in processing of the 5'-end of pre-16S rRNA. The sequence is that of Putative pre-16S rRNA nuclease from Prochlorococcus marinus (strain MIT 9215).